The chain runs to 339 residues: Anthranilate phosphoribosyltransferase (339 aa).

Residues glycine 79, 82–83, serine 87, 89–92, 107–115, and serine 119 contribute to the 5-phospho-alpha-D-ribose 1-diphosphate site; these read GD, NIST, and KHGNRSISS. Anthranilate is bound at residue glycine 79. Serine 91 lines the Mg(2+) pocket. Asparagine 110 is an anthranilate binding site. Arginine 165 contacts anthranilate. The Mg(2+) site is built by aspartate 224 and glutamate 225.

This sequence belongs to the anthranilate phosphoribosyltransferase family. In terms of assembly, homodimer. Requires Mg(2+) as cofactor.

The enzyme catalyses N-(5-phospho-beta-D-ribosyl)anthranilate + diphosphate = 5-phospho-alpha-D-ribose 1-diphosphate + anthranilate. Its pathway is amino-acid biosynthesis; L-tryptophan biosynthesis; L-tryptophan from chorismate: step 2/5. In terms of biological role, catalyzes the transfer of the phosphoribosyl group of 5-phosphorylribose-1-pyrophosphate (PRPP) to anthranilate to yield N-(5'-phosphoribosyl)-anthranilate (PRA). The sequence is that of Anthranilate phosphoribosyltransferase from Listeria monocytogenes serotype 4a (strain HCC23).